We begin with the raw amino-acid sequence, 523 residues long: MSQQVIIFDTTLRDGEQALQASLSAKEKLQIALALERMGVDVMEVGFPVSSPGDFESVQTIARTIKNSRVCALARCVEKDIDVAAQALKVADAFRIHTFIATSPMHIATKLRSTLDEVIERAVYMVKRARNYTDDVEFSCEDAGRTPVDDLARVVEAAINAGARTINIPDTVGYTMPFEFAGIISGLYERVPNIDKAIISVHTHDDLGIAVGNSLAAVHAGARQVEGAMNGIGERAGNCALEEVIMAIKVRKDIMNVHTNINHHEIWRTSQTVSQICNMPIPANKAIVGSGAFAHSSGIHQDGVLKNRENYEIMTPESIGLNQIQLNLTSRSGRAAVKHRMEEMGYKDTDYNMDHLYDAFLKLADKKGQVFDYDLEALAFINKQQEEPEHFRLDYFSVQSGSSDIATASVKLACGEEIKAEAANGNGPVDAIYQAINRITGYDVELVKYDLNAKGQGKDALGQVDIVVNHHGRRFHGVGLATDIVESSAKAMVHVLNNIWRAAEVEKELQRKAQNKENNKETV.

The Pyruvate carboxyltransferase domain maps to 5-267 (VIIFDTTLRD…HTNINHHEIW (263 aa)). Positions 14, 202, 204, and 238 each coordinate Mn(2+). A regulatory domain region spans residues 392–523 (RLDYFSVQSG…QNKENNKETV (132 aa)).

Belongs to the alpha-IPM synthase/homocitrate synthase family. LeuA type 1 subfamily. Homodimer. Requires Mn(2+) as cofactor.

It localises to the cytoplasm. The enzyme catalyses 3-methyl-2-oxobutanoate + acetyl-CoA + H2O = (2S)-2-isopropylmalate + CoA + H(+). The protein operates within amino-acid biosynthesis; L-leucine biosynthesis; L-leucine from 3-methyl-2-oxobutanoate: step 1/4. Functionally, catalyzes the condensation of the acetyl group of acetyl-CoA with 3-methyl-2-oxobutanoate (2-ketoisovalerate) to form 3-carboxy-3-hydroxy-4-methylpentanoate (2-isopropylmalate). The polypeptide is 2-isopropylmalate synthase (Salmonella dublin (strain CT_02021853)).